Reading from the N-terminus, the 193-residue chain is Peptidyl-tRNA hydrolase (193 aa).

H17 serves as a coordination point for tRNA. H22 (proton acceptor) is an active-site residue. 3 residues coordinate tRNA: F68, N70, and N116.

The protein belongs to the PTH family. In terms of assembly, monomer.

It is found in the cytoplasm. The catalysed reaction is an N-acyl-L-alpha-aminoacyl-tRNA + H2O = an N-acyl-L-amino acid + a tRNA + H(+). Its function is as follows. Hydrolyzes ribosome-free peptidyl-tRNAs (with 1 or more amino acids incorporated), which drop off the ribosome during protein synthesis, or as a result of ribosome stalling. Functionally, catalyzes the release of premature peptidyl moieties from peptidyl-tRNA molecules trapped in stalled 50S ribosomal subunits, and thus maintains levels of free tRNAs and 50S ribosomes. The chain is Peptidyl-tRNA hydrolase from Xanthomonas euvesicatoria pv. vesicatoria (strain 85-10) (Xanthomonas campestris pv. vesicatoria).